The primary structure comprises 337 residues: Tetraacyldisaccharide 4'-kinase (337 aa).

H51 to T58 serves as a coordination point for ATP.

It belongs to the LpxK family.

The enzyme catalyses a lipid A disaccharide + ATP = a lipid IVA + ADP + H(+). It functions in the pathway glycolipid biosynthesis; lipid IV(A) biosynthesis; lipid IV(A) from (3R)-3-hydroxytetradecanoyl-[acyl-carrier-protein] and UDP-N-acetyl-alpha-D-glucosamine: step 6/6. Its function is as follows. Transfers the gamma-phosphate of ATP to the 4'-position of a tetraacyldisaccharide 1-phosphate intermediate (termed DS-1-P) to form tetraacyldisaccharide 1,4'-bis-phosphate (lipid IVA). This is Tetraacyldisaccharide 4'-kinase from Nitrobacter winogradskyi (strain ATCC 25391 / DSM 10237 / CIP 104748 / NCIMB 11846 / Nb-255).